A 50-amino-acid polypeptide reads, in one-letter code: Ampulexin 1 (50 aa).

Positions 1-26 (MKAIMVLFYVMMLTIIASVSMVNGSP) are cleaved as a signal peptide.

As to quaternary structure, monomer. Expressed in venom sac and, to a lesser extent, in venom gland. Not expressed in brain.

The protein resides in the secreted. Its function is as follows. Amphipathic peptide which probably adopts an alpha-helical structure. When injected in subesophageal ganglia of cockroach P.americana, a natural host for larvae of A.compressa, dampens the escape response for about 1 hour which may contribute to early stages of hypokinesia. Has no antimicrobial activity against E.coli DH5alpha or B.thuringiensis. Is not cytotoxic in vitro. This Ampulex compressa (Emerald cockroach wasp) protein is Ampulexin 1.